The chain runs to 65 residues: Protein TrbD (65 aa).

This Escherichia coli (strain K12) protein is Protein TrbD (trbD).